Consider the following 426-residue polypeptide: Serine hydroxymethyltransferase (426 aa).

(6S)-5,6,7,8-tetrahydrofolate-binding positions include leucine 121 and 125–127; that span reads GHL. An N6-(pyridoxal phosphate)lysine modification is found at lysine 230. A (6S)-5,6,7,8-tetrahydrofolate-binding site is contributed by 354 to 356; sequence SPF.

This sequence belongs to the SHMT family. In terms of assembly, homodimer. Pyridoxal 5'-phosphate is required as a cofactor.

The protein resides in the cytoplasm. The catalysed reaction is (6R)-5,10-methylene-5,6,7,8-tetrahydrofolate + glycine + H2O = (6S)-5,6,7,8-tetrahydrofolate + L-serine. It participates in one-carbon metabolism; tetrahydrofolate interconversion. Its pathway is amino-acid biosynthesis; glycine biosynthesis; glycine from L-serine: step 1/1. In terms of biological role, catalyzes the reversible interconversion of serine and glycine with tetrahydrofolate (THF) serving as the one-carbon carrier. This reaction serves as the major source of one-carbon groups required for the biosynthesis of purines, thymidylate, methionine, and other important biomolecules. Also exhibits THF-independent aldolase activity toward beta-hydroxyamino acids, producing glycine and aldehydes, via a retro-aldol mechanism. This chain is Serine hydroxymethyltransferase, found in Gloeobacter violaceus (strain ATCC 29082 / PCC 7421).